A 639-amino-acid polypeptide reads, in one-letter code: DNA primase (639 aa).

The segment at 41–65 (CPFHNEKSPSFHVRPNHGHFHCFGC) adopts a CHC2-type zinc-finger fold. The Toprim domain occupies 262–348 (HQAVVVEGYT…AGQSFVAVAP (87 aa)). The Mg(2+) site is built by Glu268, Asp319, and Asp321. Residues 460–479 (RAAQRPTAGPPTELAVRPDP) are disordered.

It belongs to the DnaG primase family. In terms of assembly, monomer. Interacts with DnaB. Zn(2+) serves as cofactor. The cofactor is Mg(2+).

It carries out the reaction ssDNA + n NTP = ssDNA/pppN(pN)n-1 hybrid + (n-1) diphosphate.. RNA polymerase that catalyzes the synthesis of short RNA molecules used as primers for DNA polymerase during DNA replication. This is DNA primase from Mycobacterium bovis (strain ATCC BAA-935 / AF2122/97).